The sequence spans 577 residues: Peroxynitrite isomerase THAP4 (577 aa).

The THAP-type zinc finger occupies 1–85; sequence MVICCAAVNC…LKPTAVPSIF (85 aa). Positions 84 to 221 are disordered; sequence IFHLTEKKRG…DKSGISMDDF (138 aa). A compositionally biased stretch (low complexity) spans 157 to 170; the sequence is AAQEAASQEQAQQA. Ser163 is subject to Phosphoserine. An HCFC1-binding motif (HBM) motif is present at residues 235–238; it reads LHSY. At Ser239 the chain carries Phosphoserine. The segment at 240–324 is disordered; that stretch reads FSSKHTRERP…AVQSEHSDAS (85 aa). Over residues 247-266 the composition is skewed to basic and acidic residues; sequence ERPSVPREPIDRKRLKKDVE. Low complexity predominate over residues 290–300; that stretch reads TATPQKPSQSP. The tract at residues 415–577 is nitrobindin; that stretch reads PPKMNPVVEP…LHVTYKKVTP (163 aa). 2 residues coordinate heme b: Thr444 and His567.

This sequence in the C-terminal section; belongs to the nitrobindin family. In terms of assembly, homodimer. Requires heme b as cofactor.

The protein resides in the cytoplasm. It is found in the nucleus. The catalysed reaction is peroxynitrite = nitrate. It functions in the pathway nitrogen metabolism. Its function is as follows. Heme-binding protein able to scavenge peroxynitrite and to protect free L-tyrosine against peroxynitrite-mediated nitration, by acting as a peroxynitrite isomerase that converts peroxynitrite to nitrate. Therefore, this protein likely plays a role in peroxynitrite sensing and in the detoxification of reactive nitrogen and oxygen species (RNS and ROS, respectively). Is able to bind nitric oxide (NO) in vitro, but may act as a sensor of peroxynitrite levels in vivo, possibly modulating the transcriptional activity residing in the N-terminal region. In Homo sapiens (Human), this protein is Peroxynitrite isomerase THAP4.